The following is a 71-amino-acid chain: Non-structural protein 3x (71 aa).

This is Non-structural protein 3x from Canis lupus familiaris (Dog).